The following is a 203-amino-acid chain: Large ribosomal subunit protein uL18 (203 aa).

It belongs to the universal ribosomal protein uL18 family. As to quaternary structure, part of the 50S ribosomal subunit. Contacts the 5S and 23S rRNAs.

This is one of the proteins that bind and probably mediate the attachment of the 5S RNA into the large ribosomal subunit, where it forms part of the central protuberance. The sequence is that of Large ribosomal subunit protein uL18 from Pyrococcus abyssi (strain GE5 / Orsay).